Here is a 168-residue protein sequence, read N- to C-terminus: Dual-action ribosomal maturation protein DarP (168 aa).

This sequence belongs to the DarP family.

Its subcellular location is the cytoplasm. Member of a network of 50S ribosomal subunit biogenesis factors which assembles along the 30S-50S interface, preventing incorrect 23S rRNA structures from forming. Promotes peptidyl transferase center (PTC) maturation. This chain is Dual-action ribosomal maturation protein DarP, found in Neisseria meningitidis serogroup B (strain ATCC BAA-335 / MC58).